The primary structure comprises 206 residues: Adenylate kinase (206 aa).

10-15 provides a ligand contact to ATP; sequence GAGKGT. The segment at 30 to 59 is NMP; that stretch reads STGDMLRAAVAAGTPVGLKAKDIMASGGLV. AMP is bound by residues Thr31, Arg36, 57-59, 85-88, and Gln92; these read GLV and GFPR. The interval 126 to 142 is LID; it reads NRVAETTARGEQVRADD. Arg127 contacts ATP. Residues Arg139 and Arg150 each contribute to the AMP site. Met178 provides a ligand contact to ATP.

It belongs to the adenylate kinase family. As to quaternary structure, monomer.

Its subcellular location is the cytoplasm. It carries out the reaction AMP + ATP = 2 ADP. It participates in purine metabolism; AMP biosynthesis via salvage pathway; AMP from ADP: step 1/1. Its function is as follows. Catalyzes the reversible transfer of the terminal phosphate group between ATP and AMP. Plays an important role in cellular energy homeostasis and in adenine nucleotide metabolism. This chain is Adenylate kinase, found in Nitrobacter winogradskyi (strain ATCC 25391 / DSM 10237 / CIP 104748 / NCIMB 11846 / Nb-255).